Consider the following 225-residue polypeptide: Ribosomal RNA small subunit methyltransferase G (225 aa).

S-adenosyl-L-methionine-binding positions include Gly-71, Leu-76, 121–122 (AE), and Arg-139. The segment at 204-225 (VVEARRATPSNGRGRPGRSSRR) is disordered.

It belongs to the methyltransferase superfamily. RNA methyltransferase RsmG family.

The protein resides in the cytoplasm. In terms of biological role, specifically methylates the N7 position of guanine in position 518 of 16S rRNA. This Mycobacterium sp. (strain KMS) protein is Ribosomal RNA small subunit methyltransferase G.